The chain runs to 414 residues: 2,3-diketo-5-methylthiopentyl-1-phosphate enolase (414 aa).

The active-site Proton acceptor is Lys99. Residues Lys148, 174-177, His265, Gly338, and 360-361 contribute to the substrate site; these read KDDE and GG. Mg(2+) contacts are provided by Lys174, Asp176, and Glu177. At Lys174 the chain carries N6-carboxylysine.

This sequence belongs to the RuBisCO large chain family. Type IV subfamily. As to quaternary structure, homodimer. Mg(2+) serves as cofactor.

It catalyses the reaction 5-methylsulfanyl-2,3-dioxopentyl phosphate = 2-hydroxy-5-methylsulfanyl-3-oxopent-1-enyl phosphate. The protein operates within amino-acid biosynthesis; L-methionine biosynthesis via salvage pathway; L-methionine from S-methyl-5-thio-alpha-D-ribose 1-phosphate: step 3/6. Catalyzes the enolization of 2,3-diketo-5-methylthiopentyl-1-phosphate (DK-MTP-1-P) into 2-hydroxy-3-keto-5-methylthiopentenyl-1-phosphate (HK-MTPenyl-1-P). This is 2,3-diketo-5-methylthiopentyl-1-phosphate enolase from Bacillus cereus (strain Q1).